We begin with the raw amino-acid sequence, 530 residues long: ATP-dependent 6-phosphofructokinase 4, chloroplastic (530 aa).

A chloroplast-targeting transit peptide spans 1 to 54 (MEASISFLGSTKPNISLFNPSSNVLPRRDFPLPALKLKKVSVLPRILHQKRLIR). Position 121 is a phosphoserine (Ser121). Residues Gly152, 215–216 (RG), and 240–243 (GGGT) each bind ATP. Substrate-binding positions include 269 to 271 (TID), 314 to 316 (MGR), Glu370, and 427 to 430 (YMIR). Asp271 functions as the Proton acceptor in the catalytic mechanism.

It belongs to the phosphofructokinase type A (PFKA) family. PPi-dependent PFK group II subfamily. Atypical ATP-dependent clade 'X' sub-subfamily. Homotetramer. Requires Mg(2+) as cofactor. As to expression, expressed in leaves, stems and flowers.

The protein localises to the plastid. It localises to the chloroplast. The enzyme catalyses beta-D-fructose 6-phosphate + ATP = beta-D-fructose 1,6-bisphosphate + ADP + H(+). It functions in the pathway carbohydrate degradation; glycolysis; D-glyceraldehyde 3-phosphate and glycerone phosphate from D-glucose: step 3/4. Allosterically activated by AMP. In terms of biological role, catalyzes the phosphorylation of D-fructose 6-phosphate to fructose 1,6-bisphosphate by ATP, the first committing step of glycolysis. In Arabidopsis thaliana (Mouse-ear cress), this protein is ATP-dependent 6-phosphofructokinase 4, chloroplastic.